Reading from the N-terminus, the 70-residue chain is Probable protein transport protein Sec61 subunit gamma (70 aa).

The Cytoplasmic portion of the chain corresponds to 1 to 33 (MADNADDLFQIPKNFYKEGSHFIKRCVKPDRKE). Residues 34 to 62 (FLSISKAVATGFVLMGLIGYIIKLIHIPI) traverse the membrane as a helical segment. The Extracellular portion of the chain corresponds to 63–70 (NKVLVGGA).

It belongs to the SecE/SEC61-gamma family. In terms of assembly, heterotrimeric complex composed of SEC61-alpha, SEC61-beta and SEC61-gamma.

It is found in the endoplasmic reticulum membrane. Functionally, necessary for protein translocation in the endoplasmic reticulum. This chain is Probable protein transport protein Sec61 subunit gamma (sss1), found in Schizosaccharomyces pombe (strain 972 / ATCC 24843) (Fission yeast).